The primary structure comprises 499 residues: Cobyric acid synthase (499 aa).

In terms of domain architecture, GATase cobBQ-type spans 266–449 (RLEIAVVRLP…LHGLFDNHLW (184 aa)). C344 (nucleophile) is an active-site residue. H441 is an active-site residue.

The protein belongs to the CobB/CobQ family. CobQ subfamily.

Its pathway is cofactor biosynthesis; adenosylcobalamin biosynthesis. Catalyzes amidations at positions B, D, E, and G on adenosylcobyrinic A,C-diamide. NH(2) groups are provided by glutamine, and one molecule of ATP is hydrogenolyzed for each amidation. The polypeptide is Cobyric acid synthase (Synechococcus sp. (strain JA-2-3B'a(2-13)) (Cyanobacteria bacterium Yellowstone B-Prime)).